We begin with the raw amino-acid sequence, 1036 residues long: Isoleucine--tRNA ligase (1036 aa).

The 'HIGH' region signature appears at 48–58; it reads PTANGKPHVGH. The 'KMSKS' region signature appears at 590 to 594; the sequence is KMSKS. K593 provides a ligand contact to ATP.

It belongs to the class-I aminoacyl-tRNA synthetase family. IleS type 2 subfamily. In terms of assembly, monomer. Zn(2+) serves as cofactor.

Its subcellular location is the cytoplasm. The enzyme catalyses tRNA(Ile) + L-isoleucine + ATP = L-isoleucyl-tRNA(Ile) + AMP + diphosphate. Its function is as follows. Catalyzes the attachment of isoleucine to tRNA(Ile). As IleRS can inadvertently accommodate and process structurally similar amino acids such as valine, to avoid such errors it has two additional distinct tRNA(Ile)-dependent editing activities. One activity is designated as 'pretransfer' editing and involves the hydrolysis of activated Val-AMP. The other activity is designated 'posttransfer' editing and involves deacylation of mischarged Val-tRNA(Ile). This Clostridium tetani (strain Massachusetts / E88) protein is Isoleucine--tRNA ligase.